Reading from the N-terminus, the 140-residue chain is T cell receptor alpha chain constant (140 aa).

Residues 19–107 form the Ig-like C1-type domain; sequence KSVCLFTDFD…LVEKSFETDT (89 aa). Cys22 and Cys72 form a disulfide bridge. 4 N-linked (GlcNAc...) asparagine glycosylation sites follow: Asn32, Asn66, Asn77, and Asn113. The tract at residues 94–115 is connecting peptide; sequence CDVKLVEKSFETDTNLNFQNLS. The chain crosses the membrane as a helical span at residues 116–138; it reads VIGFRILLLKVAGFNLLMTLRLW. The Cytoplasmic segment spans residues 139–140; the sequence is SS.

In terms of assembly, alpha-beta TR is a heterodimer composed of an alpha and beta chain; disulfide-linked. The alpha-beta TR is associated with the transmembrane signaling CD3 coreceptor proteins to form the TR-CD3 (TcR or TCR). The assembly of alpha-beta TR heterodimers with CD3 occurs in the endoplasmic reticulum where a single alpha-beta TR heterodimer associates with one CD3D-CD3E heterodimer, one CD3G-CD3E heterodimer and one CD247 homodimer forming a stable octameric structure. CD3D-CD3E and CD3G-CD3E heterodimers preferentially associate with TR alpha and TR beta chains, respectively. The association of the CD247 homodimer is the last step of TcR assembly in the endoplasmic reticulum and is required for transport to the cell surface.

Its subcellular location is the cell membrane. In terms of biological role, constant region of T cell receptor (TR) alpha chain. Alpha-beta T cell receptors are antigen specific receptors which are essential to the immune response and are present on the cell surface of T lymphocytes. Recognize peptide-major histocompatibility (MH) (pMH) complexes that are displayed by antigen presenting cells (APC), a prerequisite for efficient T cell adaptive immunity against pathogens. Binding of alpha-beta TR to pMH complex initiates TR-CD3 clustering on the cell surface and intracellular activation of LCK that phosphorylates the ITAM motifs of CD3G, CD3D, CD3E and CD247 enabling the recruitment of ZAP70. In turn, ZAP70 phosphorylates LAT, which recruits numerous signaling molecules to form the LAT signalosome. The LAT signalosome propagates signal branching to three major signaling pathways, the calcium, the mitogen-activated protein kinase (MAPK) kinase and the nuclear factor NF-kappa-B (NF-kB) pathways, leading to the mobilization of transcription factors that are critical for gene expression and essential for T cell growth and differentiation. The T cell repertoire is generated in the thymus, by V-(D)-J rearrangement. This repertoire is then shaped by intrathymic selection events to generate a peripheral T cell pool of self-MH restricted, non-autoaggressive T cells. Post-thymic interaction of alpha-beta TR with the pMH complexes shapes TR structural and functional avidity. This is T cell receptor alpha chain constant from Homo sapiens (Human).